The chain runs to 274 residues: 2,3,4,5-tetrahydropyridine-2,6-dicarboxylate N-succinyltransferase (274 aa).

Substrate is bound by residues Arg-104 and Asp-141.

The protein belongs to the transferase hexapeptide repeat family. Homotrimer.

It is found in the cytoplasm. It carries out the reaction (S)-2,3,4,5-tetrahydrodipicolinate + succinyl-CoA + H2O = (S)-2-succinylamino-6-oxoheptanedioate + CoA. It participates in amino-acid biosynthesis; L-lysine biosynthesis via DAP pathway; LL-2,6-diaminopimelate from (S)-tetrahydrodipicolinate (succinylase route): step 1/3. This chain is 2,3,4,5-tetrahydropyridine-2,6-dicarboxylate N-succinyltransferase, found in Shewanella sediminis (strain HAW-EB3).